We begin with the raw amino-acid sequence, 591 residues long: PDZ and LIM domain protein 5 (591 aa).

Ser2 carries the N-acetylserine modification. Ser2 bears the Phosphoserine mark. Residues 2-85 (SNYNVSLVGP…SLNMTLQRAS (84 aa)) enclose the PDZ domain. Lys89 carries the N6-acetyllysine; alternate modification. Lys89 carries the N6-succinyllysine; alternate modification. A Glycyl lysine isopeptide (Lys-Gly) (interchain with G-Cter in SUMO2); alternate cross-link involves residue Lys89. Ser111, Ser134, and Ser137 each carry phosphoserine. Disordered stretches follow at residues 125-240 (YNKV…GPPR) and 255-334 (THSD…SNRP). A compositionally biased stretch (polar residues) spans 134 to 143 (SVSSPKVTSI). Over residues 144–161 (PSPSSAFTPAHAATSSHA) the composition is skewed to low complexity. The span at 162–174 (SPPPVAAVTPPPL) shows a compositional bias: pro residues. Polar residues-rich tracts occupy residues 183-195 (ANPSAAQCSSPPN) and 207-217 (PTVTSVCSESA). Phosphoserine occurs at positions 228 and 260. 2 stretches are compositionally biased toward basic and acidic residues: residues 258–273 (DASKKRLIEDTEDWRP) and 293–304 (EHLKESENDNAK). Residues 310–329 (PEPSQQSASPLSAAESLESP) show a composition bias toward low complexity. Phosphoserine is present on residues Ser313 and Ser318. Lys346 bears the N6-acetyllysine mark. The segment at 348-398 (VGSTSVKSPSWQRPNQAAPSTGRISNSASSSGTGAPMKPAVGPPQPSDQDT) is disordered. Polar residues predominate over residues 349-380 (GSTSVKSPSWQRPNQAAPSTGRISNSASSSGT). Phosphoserine is present on residues Ser355 and Ser357. LIM zinc-binding domains are found at residues 413 to 472 (PMCA…FFAP), 472 to 531 (PECG…LFGT), and 531 to 591 (TICR…SVNF).

As to quaternary structure, interacts with various PKC isoforms through the LIM domains. Interacts with actin and alpha-actinin through the PDZ domain. Interacts (via LIM domains) with SIPA1L1/SPAR; this interaction may occur preferentially with isoform 1. In terms of tissue distribution, detected in brain, in neurons, including in hippocampal neurons, and glial cells (at protein level). Detected in heart and skeletal muscle.

It is found in the postsynaptic density. It localises to the presynapse. The protein resides in the postsynapse. The protein localises to the cytoplasm. Its subcellular location is the cytosol. May play an important role in the heart development by scaffolding PKC to the Z-disk region. May play a role in the regulation of cardiomyocyte expansion. Isoforms lacking the LIM domains may negatively modulate the scaffolding activity of isoform 1. Overexpression promotes the development of heart hypertrophy. Contributes to the regulation of dendritic spine morphogenesis in neurons. May be required to restrain postsynaptic growth of excitatory synapses. Isoform 1, but not isoform 2, expression favors spine thinning and elongation. This is PDZ and LIM domain protein 5 (Pdlim5) from Rattus norvegicus (Rat).